We begin with the raw amino-acid sequence, 355 residues long: Peptide chain release factor 1 (355 aa).

Position 231 is an N5-methylglutamine (Gln231). The segment at 283-303 is disordered; that stretch reads NAQNKEARKTQVGSGDRSERI.

The protein belongs to the prokaryotic/mitochondrial release factor family. In terms of processing, methylated by PrmC. Methylation increases the termination efficiency of RF1.

It localises to the cytoplasm. Its function is as follows. Peptide chain release factor 1 directs the termination of translation in response to the peptide chain termination codons UAG and UAA. The protein is Peptide chain release factor 1 of Helicobacter hepaticus (strain ATCC 51449 / 3B1).